A 171-amino-acid polypeptide reads, in one-letter code: Endoribonuclease YbeY (171 aa).

Zn(2+) contacts are provided by H126, H130, and H136.

The protein belongs to the endoribonuclease YbeY family. Zn(2+) serves as cofactor.

The protein localises to the cytoplasm. Single strand-specific metallo-endoribonuclease involved in late-stage 70S ribosome quality control and in maturation of the 3' terminus of the 16S rRNA. In Rhizobium etli (strain CIAT 652), this protein is Endoribonuclease YbeY.